We begin with the raw amino-acid sequence, 677 residues long: DNA-directed RNA polymerase subunit beta' (677 aa).

Residues Cys-69, Cys-71, Cys-87, and Cys-90 each coordinate Zn(2+). Mg(2+)-binding residues include Asp-489, Asp-491, and Asp-493.

The protein belongs to the RNA polymerase beta' chain family. RpoC1 subfamily. In terms of assembly, in plastids the minimal PEP RNA polymerase catalytic core is composed of four subunits: alpha, beta, beta', and beta''. When a (nuclear-encoded) sigma factor is associated with the core the holoenzyme is formed, which can initiate transcription. Mg(2+) is required as a cofactor. It depends on Zn(2+) as a cofactor.

The protein resides in the plastid. It is found in the chloroplast. The enzyme catalyses RNA(n) + a ribonucleoside 5'-triphosphate = RNA(n+1) + diphosphate. DNA-dependent RNA polymerase catalyzes the transcription of DNA into RNA using the four ribonucleoside triphosphates as substrates. The polypeptide is DNA-directed RNA polymerase subunit beta' (Spinacia oleracea (Spinach)).